Here is a 179-residue protein sequence, read N- to C-terminus: Inner membrane-spanning protein YciB (179 aa).

6 helical membrane-spanning segments follow: residues Phe3 to Tyr23, Thr24 to His44, Pro49 to His69, Trp76 to Trp96, Leu121 to Phe141, and Phe149 to Leu169.

It belongs to the YciB family.

The protein localises to the cell inner membrane. Its function is as follows. Plays a role in cell envelope biogenesis, maintenance of cell envelope integrity and membrane homeostasis. The polypeptide is Inner membrane-spanning protein YciB (Cupriavidus taiwanensis (strain DSM 17343 / BCRC 17206 / CCUG 44338 / CIP 107171 / LMG 19424 / R1) (Ralstonia taiwanensis (strain LMG 19424))).